The primary structure comprises 252 residues: Phosphate import ATP-binding protein PstB 1 (252 aa).

Residues 6 to 247 (LQIRDLSVYY…PKRKETEDYI (242 aa)) form the ABC transporter domain. 38 to 45 (GPSGSGKS) is a binding site for ATP.

Belongs to the ABC transporter superfamily. Phosphate importer (TC 3.A.1.7) family. The complex is composed of two ATP-binding proteins (PstB), two transmembrane proteins (PstC and PstA) and a solute-binding protein (PstS).

The protein localises to the cell membrane. It catalyses the reaction phosphate(out) + ATP + H2O = ADP + 2 phosphate(in) + H(+). Part of the ABC transporter complex PstSACB involved in phosphate import. Responsible for energy coupling to the transport system. The chain is Phosphate import ATP-binding protein PstB 1 from Streptococcus pyogenes serotype M6 (strain ATCC BAA-946 / MGAS10394).